Reading from the N-terminus, the 728-residue chain is MSTESKCPFNHTAAGGTSNKDWWPNQLNLNILHRHSALSDPMDKDFDYAQAFKKLDLAAVKRDLQALMTTSQDWWPADFGHYGGLFVRMAWHSAGTYRTADGRGGAGGGQQRFAPLNSWPDNANLDKARRLLWPIKQKYGRNISWADLLILTGNVALESMGFKTFGYAGGRADTWEPDDVYWGSEKIWLELSGGPNSRYSGDRELENPLAAVQMGLIYVNPEGPDGNPDPVAAARDIRDTFARMAMNDEETVALIAGGHTFGKTHGAGPATDVGPEPEAAGIEQQGLGWKSAYASGKGHDAITSGLEVTWTSTPTKWSHDFFKHLFSYEWELTKSPAGAHQWVAKGADEVIPDAFDASKKHRPTMLTTDLSLRFDPAYEKISRRFYENPAEFADAFARAWFKLTHRDMGPRARYLGPEVPAEELLWQDPIPVVDHPLIDDADVAALKAKVLASGLSVAQLVSTAWASASTFRGSDKRGGANGARIRLAPQKDWEVNQPAALAAVLETLEGVRKAFNDAQTGGKKVSLADLIVLAGAAGIEQAAKNAGVAVTVPFAPGRMDASQEQTDVDAMAVLEPVADGFRNYLKSAYKTPAEALLVDKAQLLTLNGPELTVLVGGLRVLGANVGDAKHGVFTDRPGTLSNDFFVNLLDMGTEWKPVSAANDVFEGRDRATGLVKWTGTRVDLIFGSHSQLRALAEVYGSADANEKFVRDFVAAWDKVMNLDRFDLA.

A cross-link (tryptophyl-tyrosyl-methioninium (Trp-Tyr) (with M-244)) is located at residues 91 to 218; it reads WHSAGTYRTA…LAAVQMGLIY (128 aa). The Proton acceptor role is filled by histidine 92. A cross-link (tryptophyl-tyrosyl-methioninium (Tyr-Met) (with W-91)) is located at residues 218-244; that stretch reads YVNPEGPDGNPDPVAAARDIRDTFARM. Histidine 259 contributes to the heme b binding site.

This sequence belongs to the peroxidase family. Peroxidase/catalase subfamily. As to quaternary structure, homodimer or homotetramer. The cofactor is heme b. In terms of processing, formation of the three residue Trp-Tyr-Met cross-link is important for the catalase, but not the peroxidase activity of the enzyme.

The enzyme catalyses H2O2 + AH2 = A + 2 H2O. The catalysed reaction is 2 H2O2 = O2 + 2 H2O. Bifunctional enzyme with both catalase and broad-spectrum peroxidase activity. This chain is Catalase-peroxidase 1, found in Burkholderia ambifaria (strain MC40-6).